The primary structure comprises 96 residues: Co-chaperonin GroES (96 aa).

The protein belongs to the GroES chaperonin family. Heptamer of 7 subunits arranged in a ring. Interacts with the chaperonin GroEL.

It localises to the cytoplasm. Its function is as follows. Together with the chaperonin GroEL, plays an essential role in assisting protein folding. The GroEL-GroES system forms a nano-cage that allows encapsulation of the non-native substrate proteins and provides a physical environment optimized to promote and accelerate protein folding. GroES binds to the apical surface of the GroEL ring, thereby capping the opening of the GroEL channel. The sequence is that of Co-chaperonin GroES from Myxococcus xanthus (strain DK1622).